The chain runs to 249 residues: 5'-nucleotidase SurE (249 aa).

Asp-8, Asp-9, Ser-39, and Asn-91 together coordinate a divalent metal cation.

It belongs to the SurE nucleotidase family. It depends on a divalent metal cation as a cofactor.

Its subcellular location is the cytoplasm. It carries out the reaction a ribonucleoside 5'-phosphate + H2O = a ribonucleoside + phosphate. In terms of biological role, nucleotidase that shows phosphatase activity on nucleoside 5'-monophosphates. The sequence is that of 5'-nucleotidase SurE from Pseudomonas syringae pv. syringae (strain B728a).